Consider the following 635-residue polypeptide: Isethionate TRAP transporter permease protein DctMQ (635 aa).

The next 16 membrane-spanning stretches (helical) occupy residues K38–Y58, T75–I95, I117–S137, L154–V174, T192–I212, V217–G237, F266–L286, G299–I319, A350–V370, I379–A399, W431–T451, A453–S473, V481–F501, I526–L546, I572–F592, and V609–I629.

This sequence in the N-terminal section; belongs to the TRAP transporter small permease family. It in the C-terminal section; belongs to the TRAP transporter large permease family. In terms of assembly, the complex comprises the periplasmic solute receptor protein DctP, and the fused transmembrane protein DctMQ.

It is found in the cell inner membrane. The protein operates within organosulfur degradation; alkanesulfonate degradation. Part of the tripartite ATP-independent periplasmic (TRAP) transport system DctPQM involved in the uptake of isethionate (2-hydroxyethanesulfonate), which is then catabolized by enzymes encoded by adjacent genes in the locus. Thereby is involved in an anaerobic respiration pathway that converts the sulfonate isethionate to ammonia, acetate and sulfide. This chain is Isethionate TRAP transporter permease protein DctMQ, found in Oleidesulfovibrio alaskensis (strain ATCC BAA-1058 / DSM 17464 / G20) (Desulfovibrio alaskensis).